The sequence spans 583 residues: Aspartate--tRNA ligase (583 aa).

L-aspartate is bound at residue Glu-174. An aspartate region spans residues 198–201 (QITK). L-aspartate is bound at residue Arg-220. ATP-binding positions include 220–222 (RDE) and Gln-229. Position 443 (His-443) interacts with L-aspartate. Glu-477 contacts ATP. Arg-484 provides a ligand contact to L-aspartate. 529-532 (GLDR) provides a ligand contact to ATP.

The protein belongs to the class-II aminoacyl-tRNA synthetase family. Type 1 subfamily. As to quaternary structure, homodimer.

Its subcellular location is the cytoplasm. It carries out the reaction tRNA(Asp) + L-aspartate + ATP = L-aspartyl-tRNA(Asp) + AMP + diphosphate. In terms of biological role, catalyzes the attachment of L-aspartate to tRNA(Asp) in a two-step reaction: L-aspartate is first activated by ATP to form Asp-AMP and then transferred to the acceptor end of tRNA(Asp). This chain is Aspartate--tRNA ligase, found in Streptococcus agalactiae serotype V (strain ATCC BAA-611 / 2603 V/R).